The following is a 257-amino-acid chain: Protein YIPF5 (257 aa).

The Cytoplasmic portion of the chain corresponds to 1-124 (MSGFENLNTD…KVADGSIMNE (124 aa)). The tract at residues 75–106 (PASPQPFYGNNFEDEPPLLEELGINFDHIWQK) is interaction with Sec23. Residues 125–145 (TDLAGPMVFCLAFGATLLLAG) form a helical membrane-spanning segment. Residue lysine 146 is a topological domain, lumenal. The chain crosses the membrane as a helical span at residues 147 to 167 (IQFGYVYGISAIGCLGMFCLL). Residues 168-173 (NLMSMT) lie on the Cytoplasmic side of the membrane. A helical membrane pass occupies residues 174–194 (GVSFGCVASVLGYCLLPMILL). Residues 195–196 (SS) lie on the Lumenal side of the membrane. The helical transmembrane segment at 197-217 (FAVIFSLQGMVGIILTAGIIG) threads the bilayer. Over 218 to 236 (WCSFSASKIFISALAMEGQ) the chain is Cytoplasmic. The helical transmembrane segment at 237–257 (QLLVAYPCALLYGVFALISVF) threads the bilayer.

It belongs to the YIP1 family. As to quaternary structure, interacts with the COPII coat components Sec23 (SEC23A and/or SEC23B) and Sec24 (SEC24A and/or SEC24B). Interacts with YIF1A. May interact with RAB1A. Interacts with YIPF3 and YIPF4. In terms of tissue distribution, ubiquitously expressed with abundant expression in pancreatic tissue, islets, beta cells, and brain. Highly expressed in coronary smooth muscles.

The protein resides in the endoplasmic reticulum membrane. The protein localises to the golgi apparatus. It is found in the cis-Golgi network membrane. Its subcellular location is the cytoplasmic vesicle. It localises to the COPII-coated vesicle. In terms of biological role, plays a role in transport between endoplasmic reticulum and Golgi. In pancreatic beta cells, required to transport proinsulin from endoplasmic reticulum into the Golgi. This is Protein YIPF5 from Homo sapiens (Human).